The following is a 330-amino-acid chain: ADP-L-glycero-D-manno-heptose-6-epimerase (330 aa).

NADP(+) contacts are provided by residues 11 to 12 (FI), 32 to 33 (DN), lysine 39, lysine 54, 75 to 79 (EGACS), and asparagine 92. Residue tyrosine 139 is the Proton acceptor of the active site. Lysine 143 contacts NADP(+). Asparagine 168 serves as a coordination point for substrate. NADP(+) is bound by residues valine 169 and lysine 177. Lysine 177 (proton acceptor) is an active-site residue. Residues arginine 179, histidine 186, 200–203 (FGEY), arginine 213, and tyrosine 292 each bind substrate.

The protein belongs to the NAD(P)-dependent epimerase/dehydratase family. HldD subfamily. Homopentamer. The cofactor is NADP(+).

It carries out the reaction ADP-D-glycero-beta-D-manno-heptose = ADP-L-glycero-beta-D-manno-heptose. The protein operates within nucleotide-sugar biosynthesis; ADP-L-glycero-beta-D-manno-heptose biosynthesis; ADP-L-glycero-beta-D-manno-heptose from D-glycero-beta-D-manno-heptose 7-phosphate: step 4/4. Functionally, catalyzes the interconversion between ADP-D-glycero-beta-D-manno-heptose and ADP-L-glycero-beta-D-manno-heptose via an epimerization at carbon 6 of the heptose. This is ADP-L-glycero-D-manno-heptose-6-epimerase from Burkholderia ambifaria (strain MC40-6).